The sequence spans 162 residues: Inner membrane protein YbjO (162 aa).

The Periplasmic segment spans residues 1–23 (MEDETLGFFKKTSSSHARLNVPA). Residues 24–44 (LVQVAALAIIMIRGLDVLMIF) traverse the membrane as a helical segment. Residues 45 to 66 (NTLGVRGIGEFIHRSVQTWSLT) are Cytoplasmic-facing. The chain crosses the membrane as a helical span at residues 67–87 (LVFLSSLVLVFIEIWCAFSLV). At 88-94 (KGRRWAR) the chain is on the periplasmic side. Residues 95 to 115 (WLYLLTQITAASYLWAASLGY) form a helical membrane-spanning segment. Topologically, residues 116-162 (GYPELFSIPGESKREIFHSLMLQKLPDMLILMLLFVPSTSRRFFQLQ) are cytoplasmic.

Its subcellular location is the cell inner membrane. The protein is Inner membrane protein YbjO (ybjO) of Escherichia coli O157:H7.